We begin with the raw amino-acid sequence, 226 residues long: Ribonuclease S-7 (226 aa).

The signal sequence occupies residues 1–27; sequence MGITGMIYIVTMVFSLIVLILSSSTVG. Glutamine 36 contacts RNA. Cysteine 42 and cysteine 49 are oxidised to a cystine. Position 60 (histidine 60) interacts with RNA. Residue histidine 60 is the Proton donor of the active site. Residues asparagine 74 and asparagine 77 are each glycosylated (N-linked (GlcNAc...) asparagine; alternate). A disulfide bridge links cysteine 75 with cysteine 119. RNA contacts are provided by residues 98–99, phenylalanine 108, 111–112, and 115–116; these read NV, KQ, and KH. Glutamine 112 is an active-site residue. The Proton acceptor role is filled by histidine 116. Asparagine 126, asparagine 144, and asparagine 172 each carry an N-linked (GlcNAc...) asparagine glycan. 2 disulfide bridges follow: cysteine 183–cysteine 220 and cysteine 198–cysteine 209.

This sequence belongs to the RNase T2 family. In terms of processing, the N-glycans attached at Asn-74 and Asn-77 consist of either monosaccharide (GlcNAc) or disaccharide (GlcNAc-GlcNAc) that could not be distinguished. The N-glycan at Asn-144 contains mannose and xylose, and at Asn-126 contains mannose, xylose and fucose. The N-glycan at Asn-172 consists of disaccharide (GlcNAc-GlcNAc).

It catalyses the reaction a ribonucleotidyl-ribonucleotide-RNA + H2O = a 3'-end 3'-phospho-ribonucleotide-RNA + a 5'-end dephospho-ribonucleoside-RNA + H(+). Self-incompatibility (SI) is the inherited ability of a flowering plant to prevent self-fertilization by discriminating between self and non-self pollen during pollination. In many species, self-incompatibility is controlled by the single, multiallelic locus S. This is Ribonuclease S-7 from Pyrus pyrifolia (Chinese pear).